A 355-amino-acid chain; its full sequence is Probable tRNA-dihydrouridine synthase 1 (355 aa).

FMN is bound by residues 48 to 50 and Q102; that span reads PLS. C132 (proton donor) is an active-site residue. FMN is bound by residues K171, 232-234, and 256-257; these read NGD and SR.

This sequence belongs to the Dus family. It depends on FMN as a cofactor.

It carries out the reaction a 5,6-dihydrouridine in tRNA + NAD(+) = a uridine in tRNA + NADH + H(+). It catalyses the reaction a 5,6-dihydrouridine in tRNA + NADP(+) = a uridine in tRNA + NADPH + H(+). In terms of biological role, catalyzes the synthesis of 5,6-dihydrouridine (D), a modified base found in the D-loop of most tRNAs, via the reduction of the C5-C6 double bond in target uridines. The sequence is that of Probable tRNA-dihydrouridine synthase 1 (dus1) from Synechocystis sp. (strain ATCC 27184 / PCC 6803 / Kazusa).